A 177-amino-acid polypeptide reads, in one-letter code: MTTGLPSQTQVIELLGGEFARAGYEIEDVVIDHRARPPRITVVADGDTTLDLDTIAVLSRSASSLLDSLDNIGDSYVLEVSSPGIDRPLTSEKHFRRARGRKVELTLADGSQLTGRIGALQSGSLDLVVRAGREWKVREIPLAEVEKAVVQVEFSPPNPAELELATTGRAAGTEVEA.

This sequence belongs to the RimP family.

It is found in the cytoplasm. Functionally, required for maturation of 30S ribosomal subunits. The chain is Ribosome maturation factor RimP from Mycobacterium marinum (strain ATCC BAA-535 / M).